Here is a 394-residue protein sequence, read N- to C-terminus: Deoxyguanosinetriphosphate triphosphohydrolase-like protein (394 aa).

The disordered stretch occupies residues 1 to 36 (MSQAPYFVPRAPYAEDPSKSKGRRFKEDESRTRTPF). Over residues 25-36 (FKEDESRTRTPF) the composition is skewed to basic and acidic residues. Positions 70 to 210 (RLTHTLEVAQ…AALADDIAYN (141 aa)) constitute an HD domain.

Belongs to the dGTPase family. Type 2 subfamily.

The chain is Deoxyguanosinetriphosphate triphosphohydrolase-like protein from Caulobacter vibrioides (strain ATCC 19089 / CIP 103742 / CB 15) (Caulobacter crescentus).